Here is a 750-residue protein sequence, read N- to C-terminus: MGECPLRTANVAGGGTRNRDWWPNTLKLNILRQHTEATNPYDPNFDYAEAFKSLDYEGLKKDLRALMTDSQEYWPADFGHYGGLFVRMAWHSAGTYRVMDGRGGGGQGQQRFAPLNSWPDNVSLDKARRLLWPIKQKYGNKISWADLMLLTGNVALEDMGFKTFGFAGGRPDTWEADESTYWGGETTWLGNEVRYSSGNEGHKESGVIDGSESKKGHKDIHTRDLEKPVSAAHMGLIYVNPEGPDGIPDPVAAARDIRTTFSRMAMNDEETVALIAGGHTVGKTHGAAPSDNVGPEPEAAPIENQGLGWSNKHGSGKGPDTITSGLEVIWTKEPAKFTMNYLEYLFKYEWELTKSPAGANQWVAKNAEEFIPDAFDPSKKHKPRMLTTDLSLRFDPEYEKISRRFLENPEQFKDAFARAWFKLLHRDMGPRSRWLGPEVPKETLLWEDPIPTPDHPIIDGSDVDSLKKAILATGVAPSKLIQTAWASASTFRGGDKRGGANGARIRLEPQNKWEVNNPQQLAEVLKALEGVKADFEKSGKKVSIADLIVLAGVAAVEQAAGVPVPFTPGRGDATQEQTDVESFTHLEPAADAFRNYGKGTSRVTTEQIMVDRAQQLTLTAPELTVLVGGLRVLGANYDGSSHGVWTDKPGKLTNDFFVTLLDPYTSWKSVDGEVFEGTNSKSGKKLTGTRADLVFGSHSELRALAEVYGSADGQQKFTKDFVAAWDKVMNLDRFDVRRGIYDETRLKSKL.

A cross-link (tryptophyl-tyrosyl-methioninium (Trp-Tyr) (with M-264)) is located at residues 90 to 238 (WHSAGTYRVM…VSAAHMGLIY (149 aa)). The active-site Proton acceptor is His-91. Residues 199–218 (NEGHKESGVIDGSESKKGHK) are disordered. The span at 200–218 (EGHKESGVIDGSESKKGHK) shows a compositional bias: basic and acidic residues. A cross-link (tryptophyl-tyrosyl-methioninium (Tyr-Met) (with W-90)) is located at residues 238 to 264 (YVNPEGPDGIPDPVAAARDIRTTFSRM). His-279 is a heme b binding site.

It belongs to the peroxidase family. Peroxidase/catalase subfamily. As to quaternary structure, homodimer or homotetramer. Predominantly homodimeric. Requires heme b as cofactor. Post-translationally, formation of the three residue Trp-Tyr-Met cross-link is important for the catalase, but not the peroxidase activity of the enzyme.

It is found in the cytoplasm. It catalyses the reaction H2O2 + AH2 = A + 2 H2O. It carries out the reaction 2 H2O2 = O2 + 2 H2O. Bifunctional enzyme with both catalase and broad-spectrum peroxidase activity. The sequence is that of Catalase-peroxidase 1 from Pyricularia oryzae (strain 70-15 / ATCC MYA-4617 / FGSC 8958) (Rice blast fungus).